Reading from the N-terminus, the 438-residue chain is ATP-dependent protease ATPase subunit HslU (438 aa).

ATP is bound by residues I18, 60–65 (GVGKTE), D251, E316, and R388.

The protein belongs to the ClpX chaperone family. HslU subfamily. As to quaternary structure, a double ring-shaped homohexamer of HslV is capped on each side by a ring-shaped HslU homohexamer. The assembly of the HslU/HslV complex is dependent on binding of ATP.

It localises to the cytoplasm. ATPase subunit of a proteasome-like degradation complex; this subunit has chaperone activity. The binding of ATP and its subsequent hydrolysis by HslU are essential for unfolding of protein substrates subsequently hydrolyzed by HslV. HslU recognizes the N-terminal part of its protein substrates and unfolds these before they are guided to HslV for hydrolysis. This Jannaschia sp. (strain CCS1) protein is ATP-dependent protease ATPase subunit HslU.